Reading from the N-terminus, the 309-residue chain is GTP cyclohydrolase MptA (309 aa).

It belongs to the GTP cyclohydrolase IV family. As to quaternary structure, homodimer. It depends on Fe(2+) as a cofactor.

It catalyses the reaction GTP + H2O = 7,8-dihydroneopterin 2',3'-cyclic phosphate + formate + diphosphate + H(+). The protein operates within cofactor biosynthesis; 5,6,7,8-tetrahydromethanopterin biosynthesis. Functionally, converts GTP to 7,8-dihydro-D-neopterin 2',3'-cyclic phosphate, the first intermediate in the biosynthesis of coenzyme methanopterin. The polypeptide is GTP cyclohydrolase MptA (Methanococcus aeolicus (strain ATCC BAA-1280 / DSM 17508 / OCM 812 / Nankai-3)).